Here is a 557-residue protein sequence, read N- to C-terminus: Potassium-transporting ATPase potassium-binding subunit (557 aa).

Transmembrane regions (helical) follow at residues glycine 5 to serine 25, leucine 63 to glycine 83, glycine 132 to isoleucine 152, leucine 170 to isoleucine 190, phenylalanine 253 to valine 273, leucine 283 to valine 303, valine 329 to alanine 349, alanine 356 to valine 376, glycine 379 to glycine 399, leucine 416 to methionine 436, leucine 484 to alanine 504, and leucine 526 to alanine 546.

It belongs to the KdpA family. In terms of assembly, the system is composed of three essential subunits: KdpA, KdpB and KdpC.

The protein resides in the cell inner membrane. Its function is as follows. Part of the high-affinity ATP-driven potassium transport (or Kdp) system, which catalyzes the hydrolysis of ATP coupled with the electrogenic transport of potassium into the cytoplasm. This subunit binds the periplasmic potassium ions and delivers the ions to the membrane domain of KdpB through an intramembrane tunnel. This chain is Potassium-transporting ATPase potassium-binding subunit, found in Escherichia coli (strain SE11).